The sequence spans 437 residues: 3-phosphoshikimate 1-carboxyvinyltransferase (437 aa).

3 residues coordinate 3-phosphoshikimate: Lys22, Ser23, and Arg27. Lys22 is a binding site for phosphoenolpyruvate. The phosphoenolpyruvate site is built by Gly96 and Arg125. Residues Ser170, Gln172, Asp323, and Lys350 each contribute to the 3-phosphoshikimate site. Gln172 contacts phosphoenolpyruvate. The active-site Proton acceptor is Asp323. Residues Arg354 and Arg396 each contribute to the phosphoenolpyruvate site.

This sequence belongs to the EPSP synthase family. As to quaternary structure, monomer.

The protein localises to the cytoplasm. It catalyses the reaction 3-phosphoshikimate + phosphoenolpyruvate = 5-O-(1-carboxyvinyl)-3-phosphoshikimate + phosphate. It participates in metabolic intermediate biosynthesis; chorismate biosynthesis; chorismate from D-erythrose 4-phosphate and phosphoenolpyruvate: step 6/7. Its function is as follows. Catalyzes the transfer of the enolpyruvyl moiety of phosphoenolpyruvate (PEP) to the 5-hydroxyl of shikimate-3-phosphate (S3P) to produce enolpyruvyl shikimate-3-phosphate and inorganic phosphate. The polypeptide is 3-phosphoshikimate 1-carboxyvinyltransferase (Synechococcus sp. (strain RCC307)).